The chain runs to 338 residues: Fructose-1,6-bisphosphatase class 1 (338 aa).

Mg(2+) contacts are provided by glutamate 92, aspartate 115, leucine 117, and aspartate 118. Residues 118-121 (DGSS), asparagine 211, tyrosine 244, and lysine 274 contribute to the substrate site. Glutamate 280 provides a ligand contact to Mg(2+).

The protein belongs to the FBPase class 1 family. In terms of assembly, homotetramer. Requires Mg(2+) as cofactor.

The protein resides in the cytoplasm. The catalysed reaction is beta-D-fructose 1,6-bisphosphate + H2O = beta-D-fructose 6-phosphate + phosphate. It participates in carbohydrate biosynthesis; gluconeogenesis. In Photobacterium profundum (strain SS9), this protein is Fructose-1,6-bisphosphatase class 1.